A 408-amino-acid chain; its full sequence is Peptidase T (408 aa).

Position 78 (H78) interacts with Zn(2+). Residue D80 is part of the active site. D140 contacts Zn(2+). The active-site Proton acceptor is the E173. Zn(2+)-binding residues include E174, D196, and H379.

The protein belongs to the peptidase M20B family. Zn(2+) is required as a cofactor.

The protein localises to the cytoplasm. The enzyme catalyses Release of the N-terminal residue from a tripeptide.. Its function is as follows. Cleaves the N-terminal amino acid of tripeptides. This chain is Peptidase T, found in Escherichia coli O9:H4 (strain HS).